Consider the following 446-residue polypeptide: Phosphoglucosamine mutase (446 aa).

The Phosphoserine intermediate role is filled by serine 102. Mg(2+) is bound by residues serine 102, aspartate 241, aspartate 243, and aspartate 245. Serine 102 bears the Phosphoserine mark.

Belongs to the phosphohexose mutase family. Requires Mg(2+) as cofactor. In terms of processing, activated by phosphorylation.

The enzyme catalyses alpha-D-glucosamine 1-phosphate = D-glucosamine 6-phosphate. In terms of biological role, catalyzes the conversion of glucosamine-6-phosphate to glucosamine-1-phosphate. In Xylella fastidiosa (strain M23), this protein is Phosphoglucosamine mutase.